We begin with the raw amino-acid sequence, 407 residues long: E3 ubiquitin-protein ligase TRIM13 (407 aa).

The RING-type zinc-finger motif lies at Cys-10–Arg-58. The segment at Pro-89–Ile-131 adopts a B box-type zinc-finger fold. Zn(2+) contacts are provided by Cys-94, His-97, Cys-117, and His-123. Positions Leu-172–Ile-200 form a coiled coil. Residues Leu-316–Leu-336 form a helical membrane-spanning segment.

Interacts (via C-terminal domain) with VCP. Interacts with AKT1; the interaction ubiquitinates AKT1 and leads to its proteasomal degradation. Interacts with MDM2; the interaction ubiquitinates AKT1 and leads to its proteasomal degradation. Interacts with p62/SQSTM1. Interacts with TRAF6. Interacts with IKBKG/NEMO. Post-translationally, auto-ubiquitinated; requires the RING-type zinc finger. Auto-polyubiquitination leads to proteasomal degradation.

It is found in the endoplasmic reticulum membrane. The catalysed reaction is S-ubiquitinyl-[E2 ubiquitin-conjugating enzyme]-L-cysteine + [acceptor protein]-L-lysine = [E2 ubiquitin-conjugating enzyme]-L-cysteine + N(6)-ubiquitinyl-[acceptor protein]-L-lysine.. The protein operates within protein modification; protein ubiquitination. Its function is as follows. Endoplasmic reticulum (ER) membrane anchored E3 ligase involved in the retrotranslocation and turnover of membrane and secretory proteins from the ER through a set of processes named ER-associated degradation (ERAD). This process acts on misfolded proteins as well as in the regulated degradation of correctly folded proteins. Enhances ionizing radiation-induced p53/TP53 stability and apoptosis via ubiquitinating MDM2 and AKT1 and decreasing AKT1 kinase activity through MDM2 and AKT1 proteasomal degradation. Regulates ER stress-induced autophagy, and may act as a tumor suppressor. Also plays a role in innate immune response by stimulating NF-kappa-B activity in the TLR2 signaling pathway. Ubiquitinates TRAF6 via the 'Lys-29'-linked polyubiquitination chain resulting in NF-kappa-B activation. Participates as well in T-cell receptor-mediated NF-kappa-B activation. In the presence of TNF, modulates the IKK complex by regulating IKBKG/NEMO ubiquitination leading to the repression of NF-kappa-B. The protein is E3 ubiquitin-protein ligase TRIM13 (Trim13) of Rattus norvegicus (Rat).